Reading from the N-terminus, the 600-residue chain is Glutamine--fructose-6-phosphate aminotransferase [isomerizing] (600 aa).

Catalysis depends on cysteine 2, which acts as the Nucleophile; for GATase activity. The Glutamine amidotransferase type-2 domain maps to 2 to 217 (CGIVGYIGTE…DEEIVIVTKD (216 aa)). SIS domains lie at 283-422 (IRQA…AKGI) and 452-590 (IARD…VDKP). Lysine 595 functions as the For Fru-6P isomerization activity in the catalytic mechanism.

In terms of assembly, homodimer.

It localises to the cytoplasm. The catalysed reaction is D-fructose 6-phosphate + L-glutamine = D-glucosamine 6-phosphate + L-glutamate. Functionally, catalyzes the first step in hexosamine metabolism, converting fructose-6P into glucosamine-6P using glutamine as a nitrogen source. The sequence is that of Glutamine--fructose-6-phosphate aminotransferase [isomerizing] from Halalkalibacterium halodurans (strain ATCC BAA-125 / DSM 18197 / FERM 7344 / JCM 9153 / C-125) (Bacillus halodurans).